The primary structure comprises 410 residues: Chloride intracellular channel protein 5 (410 aa).

Positions 191–194 match the G-site motif; sequence CPFS. A helical membrane pass occupies residues 193 to 213; it reads FSQRLFMILWLKGVVFNVTTV. Residues 260-400 form the GST C-terminal domain; it reads YPKLAAKHRE…AADSEIELAY (141 aa).

It belongs to the chloride channel CLIC family. As to quaternary structure, component of a multimeric complex consisting of several cytoskeletal proteins, including actin, ezrin, alpha-actinin, gelsolin, and IQGAP1. Interacts with AKAP9. Interacts with TPRN. TPRN, CLIC5 and PTPQR form concentric rings at the base of stereocilia and may form a complex. Interacts with EZR, MYO6 and RDX; the proteins may work together as a complex to stabilize linkages between the plasma membrane and subjacent actin cytoskeleton at the stereocilium base. In terms of tissue distribution, widely expressed in both fetal and adult human tissues. Isoform 1 is expressed in renal glomeruli endothelial cells and podocytes (at protein level).

Its subcellular location is the cytoplasm. The protein resides in the cytoskeleton. The protein localises to the cell cortex. It localises to the membrane. It is found in the apical cell membrane. Its subcellular location is the mitochondrion. The protein resides in the cell projection. The protein localises to the stereocilium. It localises to the golgi apparatus. It is found in the microtubule organizing center. Its subcellular location is the centrosome. The enzyme catalyses chloride(in) = chloride(out). The catalysed reaction is Na(+)(in) = Na(+)(out). It carries out the reaction K(+)(in) = K(+)(out). With respect to regulation, inhibited by F-actin. In the soluble state, catalyzes glutaredoxin-like thiol disulfide exchange reactions with reduced glutathione as electron donor. Can insert into membranes and form non-selective ion channels almost equally permeable to Na(+), K(+) and Cl(-). Required for normal hearing. It is necessary for the formation of stereocilia in the inner ear and normal development of the organ of Corti. May play a role in the regulation of transepithelial ion absorption and secretion. Is required for the development and/or maintenance of the proper glomerular endothelial cell and podocyte architecture. Plays a role in formation of the lens suture in the eye, which is important for normal optical properties of the lens. The chain is Chloride intracellular channel protein 5 from Homo sapiens (Human).